The following is a 523-amino-acid chain: La-related protein 1C (523 aa).

Positions 1-16 are enriched in low complexity; it reads MASATSNNPASSSMSP. Disordered regions lie at residues 1-52 and 95-313; these read MASA…VRGE and AAGD…VRHP. Position 2 is an N-acetylalanine (A2). The span at 22 to 31 shows a compositional bias: polar residues; that stretch reads NHGSPTASVA. Low complexity-rich tracts occupy residues 32–44 and 146–169; these read QSPR…VSSP and SNKS…ASSS. Phosphoserine is present on S33. Composition is skewed to polar residues over residues 206–270 and 282–305; these read QRNG…NGNH and HGNQ…SQRG. Residues 363-452 form the HTH La-type RNA-binding domain; that stretch reads HYQDPPLHMK…RDNWQNWVLR (90 aa). Residues 474-523 form a disordered region; that stretch reads GNLSVDQSSADPIGGSSSQLQPTEALSDDQQQSSSTAPVSNHNAPDGANR. Over residues 477-516 the composition is skewed to polar residues; that stretch reads SVDQSSADPIGGSSSQLQPTEALSDDQQQSSSTAPVSNHN.

This sequence belongs to the LARP family. As to expression, age-dependent accumulation in rosette leaves.

The protein resides in the cytoplasm. Promotes leaf senescence mediated by abscisic acid (ABA), salicylic acid (SA) and jasmonic acid (MeJA), probably though the induction of expression of senescence-associated genes (SAGs) and defense-related genes. The polypeptide is La-related protein 1C (LARP1C) (Arabidopsis thaliana (Mouse-ear cress)).